The following is a 323-amino-acid chain: Ferrochelatase (323 aa).

His196 and Glu277 together coordinate Fe cation.

It belongs to the ferrochelatase family.

The protein localises to the cytoplasm. It catalyses the reaction heme b + 2 H(+) = protoporphyrin IX + Fe(2+). It participates in porphyrin-containing compound metabolism; protoheme biosynthesis; protoheme from protoporphyrin-IX: step 1/1. Catalyzes the ferrous insertion into protoporphyrin IX. The protein is Ferrochelatase of Haemophilus influenzae (strain ATCC 51907 / DSM 11121 / KW20 / Rd).